A 22-amino-acid polypeptide reads, in one-letter code: Sex pheromone inhibitor determinant (22 aa).

The propeptide occupies 1-14; that stretch reads MSKRAMKKIIPLIT.

The protein localises to the secreted. Functionally, acts as a competitive inhibitor of the CAD1 pheromone. The protein is Sex pheromone inhibitor determinant (iad) of Enterococcus faecalis (strain ATCC 700802 / V583).